The sequence spans 382 residues: Dual-specificity RNA methyltransferase RlmN (382 aa).

E94 acts as the Proton acceptor in catalysis. Residues 100–336 (EANRGTLCVS…NTITRKTRGD (237 aa)) enclose the Radical SAM core domain. C107 and C342 are joined by a disulfide. The [4Fe-4S] cluster site is built by C114, C118, and C121. S-adenosyl-L-methionine-binding positions include 168-169 (GE), S200, 222-224 (SLH), and N299. The S-methylcysteine intermediate role is filled by C342.

It belongs to the radical SAM superfamily. RlmN family. It depends on [4Fe-4S] cluster as a cofactor.

Its subcellular location is the cytoplasm. The enzyme catalyses adenosine(2503) in 23S rRNA + 2 reduced [2Fe-2S]-[ferredoxin] + 2 S-adenosyl-L-methionine = 2-methyladenosine(2503) in 23S rRNA + 5'-deoxyadenosine + L-methionine + 2 oxidized [2Fe-2S]-[ferredoxin] + S-adenosyl-L-homocysteine. It carries out the reaction adenosine(37) in tRNA + 2 reduced [2Fe-2S]-[ferredoxin] + 2 S-adenosyl-L-methionine = 2-methyladenosine(37) in tRNA + 5'-deoxyadenosine + L-methionine + 2 oxidized [2Fe-2S]-[ferredoxin] + S-adenosyl-L-homocysteine. Functionally, specifically methylates position 2 of adenine 2503 in 23S rRNA and position 2 of adenine 37 in tRNAs. m2A2503 modification seems to play a crucial role in the proofreading step occurring at the peptidyl transferase center and thus would serve to optimize ribosomal fidelity. This chain is Dual-specificity RNA methyltransferase RlmN, found in Legionella pneumophila (strain Paris).